The following is a 628-amino-acid chain: Biosynthetic arginine decarboxylase (628 aa).

At Lys99 the chain carries N6-(pyridoxal phosphate)lysine. 279 to 289 (VDVGGGLGIDY) is a substrate binding site.

It belongs to the Orn/Lys/Arg decarboxylase class-II family. SpeA subfamily. Mg(2+) is required as a cofactor. Pyridoxal 5'-phosphate serves as cofactor.

It catalyses the reaction L-arginine + H(+) = agmatine + CO2. It participates in amine and polyamine biosynthesis; agmatine biosynthesis; agmatine from L-arginine: step 1/1. Its function is as follows. Catalyzes the biosynthesis of agmatine from arginine. The chain is Biosynthetic arginine decarboxylase from Xylella fastidiosa (strain M12).